A 22-amino-acid polypeptide reads, in one-letter code: Unknown endosperm protein L (22 aa).

Positions 1-11 are enriched in basic and acidic residues; the sequence is MRHSNKIRDEE. The disordered stretch occupies residues 1–22; sequence MRHSNKIRDEEMVNNTRLNXXA. Residues 13–22 show a composition bias toward polar residues; the sequence is VNNTRLNXXA.

In terms of processing, the N-terminus is blocked.

The chain is Unknown endosperm protein L from Hordeum vulgare (Barley).